Reading from the N-terminus, the 117-residue chain is UPF0102 protein Spro_4337 (117 aa).

Belongs to the UPF0102 family.

The chain is UPF0102 protein Spro_4337 from Serratia proteamaculans (strain 568).